The chain runs to 99 residues: Large ribosomal subunit protein uL23 (99 aa).

The protein belongs to the universal ribosomal protein uL23 family. As to quaternary structure, part of the 50S ribosomal subunit. Contacts protein L29, and trigger factor when it is bound to the ribosome.

Functionally, one of the early assembly proteins it binds 23S rRNA. One of the proteins that surrounds the polypeptide exit tunnel on the outside of the ribosome. Forms the main docking site for trigger factor binding to the ribosome. In Francisella tularensis subsp. tularensis (strain SCHU S4 / Schu 4), this protein is Large ribosomal subunit protein uL23.